Consider the following 188-residue polypeptide: Peptidyl-tRNA hydrolase (188 aa).

Tyr14 contributes to the tRNA binding site. His19 acts as the Proton acceptor in catalysis. TRNA-binding residues include Tyr64, Asn66, and Asn113.

It belongs to the PTH family. In terms of assembly, monomer.

The protein resides in the cytoplasm. The catalysed reaction is an N-acyl-L-alpha-aminoacyl-tRNA + H2O = an N-acyl-L-amino acid + a tRNA + H(+). In terms of biological role, hydrolyzes ribosome-free peptidyl-tRNAs (with 1 or more amino acids incorporated), which drop off the ribosome during protein synthesis, or as a result of ribosome stalling. Functionally, catalyzes the release of premature peptidyl moieties from peptidyl-tRNA molecules trapped in stalled 50S ribosomal subunits, and thus maintains levels of free tRNAs and 50S ribosomes. The protein is Peptidyl-tRNA hydrolase of Chloroflexus aurantiacus (strain ATCC 29364 / DSM 637 / Y-400-fl).